The chain runs to 110 residues: UPF0122 protein lmo1802 (110 aa).

This sequence belongs to the UPF0122 family.

Might take part in the signal recognition particle (SRP) pathway. This is inferred from the conservation of its genetic proximity to ftsY/ffh. May be a regulatory protein. This is UPF0122 protein lmo1802 from Listeria monocytogenes serovar 1/2a (strain ATCC BAA-679 / EGD-e).